The chain runs to 139 residues: Transcription initiation factor IIA small chain homolog (139 aa).

The tract at residues 113–139 (LSAQGPSKRVNRAHAAAAGDDEDDDSD) is disordered.

It belongs to the TFIIA subunit 2 family.

The protein localises to the nucleus. This chain is Transcription initiation factor IIA small chain homolog, found in Caenorhabditis elegans.